The primary structure comprises 160 residues: Cyclic pyranopterin monophosphate synthase (160 aa).

Residues 75 to 77 (LCH) and 113 to 114 (ME) contribute to the substrate site. Residue Asp-128 is part of the active site.

This sequence belongs to the MoaC family. As to quaternary structure, homohexamer; trimer of dimers.

The catalysed reaction is (8S)-3',8-cyclo-7,8-dihydroguanosine 5'-triphosphate = cyclic pyranopterin phosphate + diphosphate. It functions in the pathway cofactor biosynthesis; molybdopterin biosynthesis. In terms of biological role, catalyzes the conversion of (8S)-3',8-cyclo-7,8-dihydroguanosine 5'-triphosphate to cyclic pyranopterin monophosphate (cPMP). The protein is Cyclic pyranopterin monophosphate synthase of Methylobacterium nodulans (strain LMG 21967 / CNCM I-2342 / ORS 2060).